The primary structure comprises 316 residues: Protein lifeguard 2 (316 aa).

Residues 1–53 (MTQGKLSVANKAPGTEGQQQVHGEKKEAPAVPSAPPSYEEATSGEGMKAGAFP) form a disordered region. 3 helical membrane-spanning segments follow: residues 106–126 (VYTI…LFTF), 138–158 (PGWY…LACC), and 165–185 (FPWN…LTGM). N191 is a glycosylation site (N-linked (GlcNAc...) asparagine). Helical transmembrane passes span 194–214 (SVLL…VFSF), 225–245 (GVLF…AILL), 250–270 (VPWL…LFLA), and 290–310 (IFGA…FLQL).

It belongs to the BI1 family. LFG subfamily. As to quaternary structure, interacts with FAS/TNFRSF6 and BAX.

The protein resides in the cell membrane. It is found in the membrane raft. It localises to the postsynaptic cell membrane. Functionally, antiapoptotic protein which protects cells uniquely from Fas-induced apoptosis. Regulates Fas-mediated apoptosis in neurons by interfering with caspase-8 activation. Plays a role in cerebellar development by affecting cerebellar size, internal granular layer (IGL) thickness, and Purkinje cell (PC) development. This is Protein lifeguard 2 (FAIM2) from Pongo abelii (Sumatran orangutan).